The following is a 309-amino-acid chain: MQDIQGIVDSIYDSMLPRLGEGKVADYIPELAKVDPNQFGIAITTVDGTTYTAGNALVPFSIQSISKVFMLTLALGKAGETVWNRVGREPSGSSFNSIVQLEHEHGIPRNPFVNAGAIVVTDIVLSGHQPREAIGELLRFVRYLADDDTISIDDTVAKSEQATGFRNFALANFMRSFGNLHHPVEHTLGVYFHQCALSMTCAQLSRAGLFLANRGRNPLSGHTVVSDRRARRINALMLTCGHYDGSGDFAYHVGLPGKSGVGGGIMAVAPGNASIAVWSPGLNKVGNSALGSQALELLATKTGWSVFGA.

Substrate is bound by residues Ser64, Asn114, Glu160, Asn167, Tyr191, Tyr243, and Val261.

The protein belongs to the glutaminase family. In terms of assembly, homotetramer.

The catalysed reaction is L-glutamine + H2O = L-glutamate + NH4(+). The chain is Glutaminase from Agrobacterium fabrum (strain C58 / ATCC 33970) (Agrobacterium tumefaciens (strain C58)).